The primary structure comprises 561 residues: Carboxylesterase 1F (561 aa).

The N-terminal stretch at 1-17 is a signal peptide; sequence MFLSTLFLVSLATCVIC. A disulfide bond links cysteine 87 and cysteine 116. The active-site Acyl-ester intermediate is serine 221. A disulfide bridge connects residues cysteine 273 and cysteine 284. Active-site charge relay system residues include glutamate 353 and histidine 466. Positions 558 to 561 match the Prevents secretion from ER motif; it reads HNEL.

It belongs to the type-B carboxylesterase/lipase family. In terms of tissue distribution, expressed in liver, white and brown adipose tissue, kidney, intestine, adrenal, heart and ovary. Not detected in muscle, lung, testis, brain and spleen.

The protein localises to the lipid droplet. It localises to the cytoplasm. Its subcellular location is the cytosol. The protein resides in the endoplasmic reticulum. It is found in the microsome. The enzyme catalyses a carboxylic ester + H2O = an alcohol + a carboxylate + H(+). It catalyses the reaction all-trans-retinyl hexadecanoate + H2O = all-trans-retinol + hexadecanoate + H(+). Functionally, involved in the detoxification of xenobiotics and in the activation of ester and amide prodrugs. Hydrolyzes retinyl esters. Hydrolyzes p-nitrophenyl butyrate (PNPB), triacylglycerol and monoacylglycerol. Shows higher activity against PNPB, a short-chain fatty acid ester, than against triolein, a long-chain fatty acid ester. Shows no detectable activity against diacylglycerol, cholesterol ester or phospholipids. May play a role in adipocyte lipolysis. The polypeptide is Carboxylesterase 1F (Mus musculus (Mouse)).